The primary structure comprises 702 residues: Acetylcholinesterase (702 aa).

The signal sequence occupies residues 1-36; that stretch reads MEIRGLITRLLGPCHLRHLILCSLGLYSILVQSVHC. A disordered region spans residues 107 to 134; it reads HIHSTTTRRRGLTRRESSSDATDSDPLV. Asparagine 187 is a glycosylation site (N-linked (GlcNAc...) asparagine). The cysteines at positions 195 and 222 are disulfide-linked. Serine 327 acts as the Acyl-ester intermediate in catalysis. Residues cysteine 381 and cysteine 394 are joined by a disulfide bond. Active-site charge relay system residues include glutamate 453 and histidine 567. Cysteines 529 and 650 form a disulfide. Residue asparagine 637 is glycosylated (N-linked (GlcNAc...) asparagine).

It belongs to the type-B carboxylesterase/lipase family.

It localises to the synapse. The protein localises to the secreted. The protein resides in the cell membrane. The enzyme catalyses acetylcholine + H2O = choline + acetate + H(+). In terms of biological role, rapidly hydrolyzes choline released into the synapse. This Culex pipiens (House mosquito) protein is Acetylcholinesterase (ACHE1).